The sequence spans 436 residues: GTPase Obg (436 aa).

The Obg domain occupies 2–160 (SMFLDTAKIQ…RELLLELKVL (159 aa)). One can recognise an OBG-type G domain in the interval 161–338 (ADVGLVGFPS…LLDATAELLD (178 aa)). GTP contacts are provided by residues 167 to 174 (GFPSVGKS), 192 to 196 (FTTIV), 214 to 217 (DLPG), 284 to 287 (NKMD), and 319 to 321 (SSL). Residues Ser-174 and Thr-194 each contribute to the Mg(2+) site. In terms of domain architecture, OCT spans 358-436 (GFDEEAPAFE…IGKFEFEFVD (79 aa)).

The protein belongs to the TRAFAC class OBG-HflX-like GTPase superfamily. OBG GTPase family. Monomer. Mg(2+) is required as a cofactor.

It is found in the cytoplasm. Functionally, an essential GTPase which binds GTP, GDP and possibly (p)ppGpp with moderate affinity, with high nucleotide exchange rates and a fairly low GTP hydrolysis rate. Plays a role in control of the cell cycle, stress response, ribosome biogenesis and in those bacteria that undergo differentiation, in morphogenesis control. This Streptococcus gordonii (strain Challis / ATCC 35105 / BCRC 15272 / CH1 / DL1 / V288) protein is GTPase Obg.